The primary structure comprises 185 residues: NEDD8-conjugating enzyme UBE2F (185 aa).

The interval 1–29 (MLTLASKLKREEGVRAGRTPAGSNDAAHR) is interaction with uba3. The UBC core domain maps to 32–185 (IRDRLLIKEV…VQDFIKNYAR (154 aa)). Cys-116 functions as the Glycyl thioester intermediate in the catalytic mechanism.

The protein belongs to the ubiquitin-conjugating enzyme family. UBE2F subfamily.

It carries out the reaction [E1 NEDD8-activating enzyme]-S-[NEDD8 protein]-yl-L-cysteine + [E2 NEDD8-conjugating enzyme]-L-cysteine = [E1 NEDD8-activating enzyme]-L-cysteine + [E2 NEDD8-conjugating enzyme]-S-[NEDD8-protein]-yl-L-cysteine.. It functions in the pathway protein modification; protein neddylation. Functionally, accepts the ubiquitin-like protein NEDD8 from the UBA3-NAE1 E1 complex and catalyzes its covalent attachment to other proteins. Together with the E3 ubiquitin ligase rnf7/rbx2, specifically neddylates cullin-5 (cul5). Does not neddylate cul1, cul2, cul3, cul4a or cul4b. This Danio rerio (Zebrafish) protein is NEDD8-conjugating enzyme UBE2F (ube2f).